The chain runs to 630 residues: Vacuolar protein 8 (630 aa).

Gly-2 carries the N-myristoyl glycine lipid modification. 9 ARM repeats span residues 74–115 (EITE…NLAV), 117–156 (AENK…NLAT), 158–197 (DENK…NMTH), 199–238 (DENR…NIAV), 242–281 (NRKK…NLAS), 283–322 (SKYQ…NVSI), 324–364 (PANE…NLAA), 408–447 (DDLK…NLSS), and 456–495 (FNAV…QLLE). Disordered stretches follow at residues 519–558 (AKSP…EGEG) and 572–630 (EVGE…GRDR). Acidic residues predominate over residues 543–558 (SEDEFEDGLTDQEGEG). Residues 598-607 (GQGQTSQVGS) show a composition bias toward polar residues.

It belongs to the beta-catenin family.

The protein resides in the vacuole membrane. Its function is as follows. Functions in both vacuole inheritance and protein targeting from the cytoplasm to vacuole. The protein is Vacuolar protein 8 (VAC8) of Cryptococcus neoformans var. neoformans serotype D (strain B-3501A) (Filobasidiella neoformans).